A 289-amino-acid chain; its full sequence is Probable endonuclease 4 (289 aa).

9 residues coordinate Zn(2+): His-74, His-115, Glu-150, Asp-184, His-187, His-218, Asp-231, His-233, and Glu-263.

Belongs to the AP endonuclease 2 family. It depends on Zn(2+) as a cofactor.

It carries out the reaction Endonucleolytic cleavage to 5'-phosphooligonucleotide end-products.. Its function is as follows. Endonuclease IV plays a role in DNA repair. It cleaves phosphodiester bonds at apurinic or apyrimidinic (AP) sites, generating a 3'-hydroxyl group and a 5'-terminal sugar phosphate. This chain is Probable endonuclease 4, found in Mycoplasma mycoides subsp. mycoides SC (strain CCUG 32753 / NCTC 10114 / PG1).